Reading from the N-terminus, the 615-residue chain is Dolichyl-diphosphooligosaccharide--protein glycosyltransferase subunit 1A (615 aa).

Residues 1–28 form the signal peptide; it reads MATPPPLRRVAALLLLLVAAASTPTARA. Over 29-437 the chain is Lumenal; the sequence is DLVVTRADRK…RFNNISLLRE (409 aa). The residue at position 187 (Lys-187) is an N6-acetyllysine. N-linked (GlcNAc...) asparagine glycans are attached at residues Asn-300, Asn-353, and Asn-431. The helical transmembrane segment at 438–455 threads the bilayer; sequence PMMLITGFFLLFMACIVY. Topologically, residues 456-615 are cytoplasmic; the sequence is MRTDMSISKN…ESLLEYISEI (160 aa).

This sequence belongs to the OST1 family. Component of the oligosaccharyltransferase (OST) complex.

Its subcellular location is the endoplasmic reticulum membrane. It functions in the pathway protein modification; protein glycosylation. In terms of biological role, subunit of the oligosaccharyl transferase (OST) complex that catalyzes the initial transfer of a defined glycan (Glc(3)Man(9)GlcNAc(2) in eukaryotes) from the lipid carrier dolichol-pyrophosphate to an asparagine residue within an Asn-X-Ser/Thr consensus motif in nascent polypeptide chains, the first step in protein N-glycosylation. N-glycosylation occurs cotranslationally and the complex associates with the Sec61 complex at the channel-forming translocon complex that mediates protein translocation across the endoplasmic reticulum (ER). All subunits are required for a maximal enzyme activity. In Oryza sativa subsp. japonica (Rice), this protein is Dolichyl-diphosphooligosaccharide--protein glycosyltransferase subunit 1A (OST1A).